The primary structure comprises 105 residues: DNA-directed RNA polymerase subunit omega (105 aa).

It belongs to the RNA polymerase subunit omega family. In terms of assembly, the RNAP catalytic core consists of 2 alpha, 1 beta, 1 beta' and 1 omega subunit. When a sigma factor is associated with the core the holoenzyme is formed, which can initiate transcription.

It catalyses the reaction RNA(n) + a ribonucleoside 5'-triphosphate = RNA(n+1) + diphosphate. Promotes RNA polymerase assembly. Latches the N- and C-terminal regions of the beta' subunit thereby facilitating its interaction with the beta and alpha subunits. In Streptococcus pyogenes serotype M12 (strain MGAS2096), this protein is DNA-directed RNA polymerase subunit omega.